Consider the following 584-residue polypeptide: Beta-fructofuranosidase, insoluble isoenzyme CWINV1 (584 aa).

Residues 1-28 (MTKEVCSNIGLWLLLTLLIGNYVVNLEA) form the signal peptide. Substrate is bound by residues 63–66 (WMND), Gln82, Trp90, and 125–126 (WS). Asp66 is a catalytic residue. 2 N-linked (GlcNAc...) asparagine glycosylation sites follow: Asn159 and Asn186. Substrate-binding positions include 191–192 (RD), Glu246, and Asp282. N-linked (GlcNAc...) asparagine glycosylation is found at Asn342 and Asn446. A disulfide bridge links Cys442 with Cys491.

It belongs to the glycosyl hydrolase 32 family. As to expression, expressed in seedlings, leaves, flowers, and seeds.

The protein resides in the secreted. It localises to the extracellular space. It is found in the apoplast. The protein localises to the cell wall. It catalyses the reaction Hydrolysis of terminal non-reducing beta-D-fructofuranoside residues in beta-D-fructofuranosides.. In terms of biological role, beta-fructofuranosidase that can use sucrose and 1-kestose, and, to a lower extent, neokestose and levan, as substrates, but not inuline. The polypeptide is Beta-fructofuranosidase, insoluble isoenzyme CWINV1 (CWINV1) (Arabidopsis thaliana (Mouse-ear cress)).